Consider the following 149-residue polypeptide: Large ribosomal subunit protein bL9 (149 aa).

The protein belongs to the bacterial ribosomal protein bL9 family.

Binds to the 23S rRNA. In Haemophilus ducreyi (strain 35000HP / ATCC 700724), this protein is Large ribosomal subunit protein bL9.